A 158-amino-acid polypeptide reads, in one-letter code: NAD(P)H-quinone oxidoreductase subunit J, chloroplastic (158 aa).

The protein belongs to the complex I 30 kDa subunit family. In terms of assembly, NDH is composed of at least 16 different subunits, 5 of which are encoded in the nucleus.

The protein localises to the plastid. Its subcellular location is the chloroplast thylakoid membrane. The catalysed reaction is a plastoquinone + NADH + (n+1) H(+)(in) = a plastoquinol + NAD(+) + n H(+)(out). It carries out the reaction a plastoquinone + NADPH + (n+1) H(+)(in) = a plastoquinol + NADP(+) + n H(+)(out). Functionally, NDH shuttles electrons from NAD(P)H:plastoquinone, via FMN and iron-sulfur (Fe-S) centers, to quinones in the photosynthetic chain and possibly in a chloroplast respiratory chain. The immediate electron acceptor for the enzyme in this species is believed to be plastoquinone. Couples the redox reaction to proton translocation, and thus conserves the redox energy in a proton gradient. This is NAD(P)H-quinone oxidoreductase subunit J, chloroplastic from Illicium oligandrum (Star anise).